We begin with the raw amino-acid sequence, 100 residues long: Pancreatic trypsin inhibitor (100 aa).

Positions 1–21 (MKMSRLCLSVALLVLLGTLAA) are cleaved as a signal peptide. Positions 22–35 (STPGCDTSNQAKAQ) are excised as a propeptide. In terms of domain architecture, BPTI/Kunitz inhibitor spans 40–90 (CLEPPYTGPCKARIIRYFYNAKAGLCQTFVYGGCRAKRNNFKSAEDCMRTC). 3 disulfide bridges follow: Cys40-Cys90, Cys49-Cys73, and Cys65-Cys86. Residues 94–100 (IGPWENL) constitute a propeptide that is removed on maturation.

It is found in the secreted. Inhibits trypsin, kallikrein, chymotrypsin, and plasmin. The sequence is that of Pancreatic trypsin inhibitor from Bos taurus (Bovine).